Consider the following 530-residue polypeptide: Glucose-6-phosphate isomerase (530 aa).

The active-site Proton donor is glutamate 335. Active-site residues include histidine 366 and lysine 495.

This sequence belongs to the GPI family.

Its subcellular location is the cytoplasm. The enzyme catalyses alpha-D-glucose 6-phosphate = beta-D-fructose 6-phosphate. It functions in the pathway carbohydrate biosynthesis; gluconeogenesis. The protein operates within carbohydrate degradation; glycolysis; D-glyceraldehyde 3-phosphate and glycerone phosphate from D-glucose: step 2/4. Functionally, catalyzes the reversible isomerization of glucose-6-phosphate to fructose-6-phosphate. The polypeptide is Glucose-6-phosphate isomerase (Roseobacter denitrificans (strain ATCC 33942 / OCh 114) (Erythrobacter sp. (strain OCh 114))).